The chain runs to 481 residues: Putative F-box/FBD/LRR-repeat protein At5g25850 (481 aa).

One can recognise an F-box domain in the interval 19–69 (INRLSQLSDPLICQILSHLPIKEVVTTSVLSTRWKNIWLSVPSLELIYSIF). LRR repeat units follow at residues 123–151 (VRRV…KLFH), 173–198 (VWFP…KIDV), and 328–356 (HVTL…IVAF). Positions 401-452 (QLSFSSVPKCLLSSLQFVELNAQILRFDGEILNLAKYFLENSSILQKLTLHP) constitute an FBD domain.

This chain is Putative F-box/FBD/LRR-repeat protein At5g25850, found in Arabidopsis thaliana (Mouse-ear cress).